We begin with the raw amino-acid sequence, 109 residues long: Flagellar hook-basal body complex protein FliE (109 aa).

Belongs to the FliE family.

Its subcellular location is the bacterial flagellum basal body. The protein is Flagellar hook-basal body complex protein FliE of Nitrosomonas eutropha (strain DSM 101675 / C91 / Nm57).